The sequence spans 347 residues: Heat-inducible transcription repressor HrcA (347 aa).

It belongs to the HrcA family.

Functionally, negative regulator of class I heat shock genes (grpE-dnaK-dnaJ and groELS operons). Prevents heat-shock induction of these operons. This chain is Heat-inducible transcription repressor HrcA, found in Sphingopyxis alaskensis (strain DSM 13593 / LMG 18877 / RB2256) (Sphingomonas alaskensis).